The chain runs to 390 residues: Phosphopentomutase (390 aa).

Residues D11, D283, H288, D324, H325, and H336 each coordinate Mn(2+).

It belongs to the phosphopentomutase family. It depends on Mn(2+) as a cofactor.

The protein localises to the cytoplasm. The catalysed reaction is 2-deoxy-alpha-D-ribose 1-phosphate = 2-deoxy-D-ribose 5-phosphate. It catalyses the reaction alpha-D-ribose 1-phosphate = D-ribose 5-phosphate. The protein operates within carbohydrate degradation; 2-deoxy-D-ribose 1-phosphate degradation; D-glyceraldehyde 3-phosphate and acetaldehyde from 2-deoxy-alpha-D-ribose 1-phosphate: step 1/2. Its function is as follows. Isomerase that catalyzes the conversion of deoxy-ribose 1-phosphate (dRib-1-P) and ribose 1-phosphate (Rib-1-P) to deoxy-ribose 5-phosphate (dRib-5-P) and ribose 5-phosphate (Rib-5-P), respectively. The protein is Phosphopentomutase of Clostridium acetobutylicum (strain ATCC 824 / DSM 792 / JCM 1419 / IAM 19013 / LMG 5710 / NBRC 13948 / NRRL B-527 / VKM B-1787 / 2291 / W).